We begin with the raw amino-acid sequence, 517 residues long: Quinol oxidase subunit 1 (517 aa).

12 helical membrane-spanning segments follow: residues 19–39 (VVWL…IAAM), 64–84 (IHGW…VIGF), 98–118 (QMAI…AGSP), 150–170 (MAYL…VTLI), 185–205 (IFAA…PALA), 226–246 (WAIL…FPLF), 271–291 (IYLL…TWPL), 303–323 (TLIL…TIFT), 333–353 (VGMG…QALV), 369–389 (VVGH…TTVF), 412–432 (IGMI…SVAG), and 460–480 (IGIP…LAYA). Position 65 (His65) interacts with Fe(II)-heme a. 4 residues coordinate Cu cation: His235, Tyr239, His284, and His285. A cross-link (1'-histidyl-3'-tyrosine (His-Tyr)) is located at residues 235–239 (HPVVY). His372 contacts heme a3. His374 contacts Fe(II)-heme a.

Belongs to the heme-copper respiratory oxidase family.

It localises to the cell membrane. The catalysed reaction is 2 a quinol + O2 = 2 a quinone + 2 H2O. In terms of biological role, catalyzes the reduction of oxygen to water. Functionally, subunits I, II and III form the functional core of the enzyme complex. Electrons originating in caldariella quinol are transferred to the binuclear center formed by heme A3 and Cu(B). Its function is as follows. Subunit I binds heme a and the bimetallic center. The polypeptide is Quinol oxidase subunit 1 (soxB) (Sulfolobus acidocaldarius (strain ATCC 33909 / DSM 639 / JCM 8929 / NBRC 15157 / NCIMB 11770)).